Consider the following 84-residue polypeptide: Beta-defensin 119 (84 aa).

Positions 1–21 are cleaved as a signal peptide; sequence MKLLYLFLAILLAIEEPVISG. Cystine bridges form between C35-C49 and C39-C56.

It belongs to the beta-defensin family.

It is found in the secreted. Its function is as follows. Has antibacterial activity. The sequence is that of Beta-defensin 119 (DEFB119) from Pan troglodytes (Chimpanzee).